The chain runs to 471 residues: Tripartite motif-containing protein 60 (471 aa).

The segment at C16–R57 adopts an RING-type zinc-finger fold. The B box-type zinc-finger motif lies at K92–I133. 4 residues coordinate Zn(2+): C97, H100, C119, and H125. A coiled-coil region spans residues E171 to L223. The region spanning F277–E470 is the B30.2/SPRY domain.

This sequence belongs to the TRIM/RBCC family.

In terms of biological role, E3 SUMO-protein ligase that mediates SUMOylation of TAB2 leading to inhibition of NF-kappa-B and MAPK pathways by suppressing the TRAF6/TAB2/TAK1 complex. In Homo sapiens (Human), this protein is Tripartite motif-containing protein 60 (TRIM60).